The sequence spans 762 residues: Primary amine oxidase, liver isozyme (762 aa).

The signal sequence occupies residues 1-16 (MFIFIFLSLWTLLVMG). The segment at 23-54 (GSEEGVGKQCHPSLPPRCPSRSPSDQPWTHPD) is disordered. A glycan (N-linked (GlcNAc...) asparagine) is linked at Asn-136. Residues Cys-197 and Cys-198 are joined by a disulfide bond. Asn-231 carries an N-linked (GlcNAc...) asparagine glycan. 383 to 393 (YMDSGFGMGYF) provides a ligand contact to substrate. The Proton acceptor role is filled by Asp-385. Residues Cys-403 and Cys-429 are joined by a disulfide bond. 467–472 (MLNYDY) is a binding site for substrate. Tyr-470 serves as the catalytic Schiff-base intermediate with substrate; via topaquinone. The residue at position 470 (Tyr-470) is a 2',4',5'-topaquinone. The Cu cation site is built by His-519 and His-521. The Ca(2+) site is built by Asp-528, Leu-529, Asp-530, Glu-571, Phe-662, and Asn-664. A glycan (N-linked (GlcNAc...) asparagine) is linked at Asn-665. 3 residues coordinate Ca(2+): Glu-666, Asp-672, and Leu-673. Residue His-683 participates in Cu cation binding. Cysteines 733 and 740 form a disulfide.

It belongs to the copper/topaquinone oxidase family. Homodimer; disulfide-linked. Cu cation is required as a cofactor. The cofactor is Ca(2+). It depends on L-topaquinone as a cofactor. In terms of processing, topaquinone (TPQ) is generated by copper-dependent autoxidation of a specific tyrosyl residue. As to expression, liver.

The protein resides in the secreted. It localises to the extracellular space. The catalysed reaction is a primary methyl amine + O2 + H2O = an aldehyde + H2O2 + NH4(+). In Bos taurus (Bovine), this protein is Primary amine oxidase, liver isozyme.